A 1861-amino-acid polypeptide reads, in one-letter code: Polyketide synthase 2 (1861 aa).

Residues 109–525 (DSKIAIIGMS…GGNSALLLED (417 aa)) form the Ketosynthase family 3 (KS3) domain. Catalysis depends on for beta-ketoacyl synthase activity residues cysteine 264, histidine 399, and histidine 441. Residues 626–931 (GFVFSGQGAQ…PSLHRKDDGW (306 aa)) are malonyl-CoA:ACP transacylase (MAT) domain. The active-site For acyl/malonyl transferase activity is serine 716. The segment at 1008 to 1312 (TSSVQKVIQQ…VFGGMTVLPP (305 aa)) is product template (PT) domain. Positions 1012-1146 (QKVIQQTDGP…CILRFADPKS (135 aa)) are N-terminal hotdog fold. A PKS/mFAS DH domain is found at 1012–1318 (QKVIQQTDGP…VLPPRRGADA (307 aa)). Catalysis depends on histidine 1045, which acts as the Proton acceptor; for dehydratase activity. The segment at 1174–1318 (DSLLSKGIVY…VLPPRRGADA (145 aa)) is C-terminal hotdog fold. Catalysis depends on aspartate 1232, which acts as the Proton donor; for dehydratase activity. The Carrier 1 domain maps to 1356–1433 (SPQSGAIHRI…ELRLFLAADQ (78 aa)). Position 1393 is an O-(pantetheine 4'-phosphoryl)serine (serine 1393). The disordered stretch occupies residues 1441–1470 (CESSNGQHTPQTSDKGSGTLTAQKPDHDTD). The segment covering 1442-1462 (ESSNGQHTPQTSDKGSGTLTA) has biased composition (polar residues). Positions 1472 to 1546 (EMTLNRVCAI…SLQKTLRGTE (75 aa)) constitute a Carrier 2 domain. Serine 1506 is subject to O-(pantetheine 4'-phosphoryl)serine. The tract at residues 1582–1855 (ASAPHATSIL…IIEMSNLIGD (274 aa)) is thioesterase (TE) domain. Serine 1685 serves as the catalytic For thioesterase activity.

In terms of biological role, polyketide synthase; part of the Pks2 gene cluster that mediates the formation of infectious structures (appressoria), enabling these fungi to kill insects faster. The product of the Pks2 gene cluster is different from the one of Pks1 and has still not been identified. This Metarhizium acridum (strain CQMa 102) protein is Polyketide synthase 2.